We begin with the raw amino-acid sequence, 426 residues long: Tryptophan synthase beta chain (426 aa).

The residue at position 108 (lysine 108) is an N6-(pyridoxal phosphate)lysine.

The protein belongs to the TrpB family. As to quaternary structure, tetramer of two alpha and two beta chains. It depends on pyridoxal 5'-phosphate as a cofactor.

It carries out the reaction (1S,2R)-1-C-(indol-3-yl)glycerol 3-phosphate + L-serine = D-glyceraldehyde 3-phosphate + L-tryptophan + H2O. It participates in amino-acid biosynthesis; L-tryptophan biosynthesis; L-tryptophan from chorismate: step 5/5. Its function is as follows. The beta subunit is responsible for the synthesis of L-tryptophan from indole and L-serine. The chain is Tryptophan synthase beta chain (trpB) from Thermoplasma volcanium (strain ATCC 51530 / DSM 4299 / JCM 9571 / NBRC 15438 / GSS1).